Here is a 283-residue protein sequence, read N- to C-terminus: 4-diphosphocytidyl-2-C-methyl-D-erythritol kinase (283 aa).

Residue Lys-9 is part of the active site. 93–103 serves as a coordination point for ATP; the sequence is PIAAGLAGGSS. The active site involves Asp-135.

Belongs to the GHMP kinase family. IspE subfamily.

The catalysed reaction is 4-CDP-2-C-methyl-D-erythritol + ATP = 4-CDP-2-C-methyl-D-erythritol 2-phosphate + ADP + H(+). The protein operates within isoprenoid biosynthesis; isopentenyl diphosphate biosynthesis via DXP pathway; isopentenyl diphosphate from 1-deoxy-D-xylulose 5-phosphate: step 3/6. Functionally, catalyzes the phosphorylation of the position 2 hydroxy group of 4-diphosphocytidyl-2C-methyl-D-erythritol. This is 4-diphosphocytidyl-2-C-methyl-D-erythritol kinase from Macrococcus caseolyticus (strain JCSC5402) (Macrococcoides caseolyticum).